The chain runs to 204 residues: 3-isopropylmalate dehydratase small subunit (204 aa).

It belongs to the LeuD family. LeuD type 1 subfamily. Heterodimer of LeuC and LeuD.

It catalyses the reaction (2R,3S)-3-isopropylmalate = (2S)-2-isopropylmalate. The protein operates within amino-acid biosynthesis; L-leucine biosynthesis; L-leucine from 3-methyl-2-oxobutanoate: step 2/4. Catalyzes the isomerization between 2-isopropylmalate and 3-isopropylmalate, via the formation of 2-isopropylmaleate. The protein is 3-isopropylmalate dehydratase small subunit of Clavibacter michiganensis subsp. michiganensis (strain NCPPB 382).